Reading from the N-terminus, the 53-residue chain is UPF0391 membrane protein Meso_3392 (53 aa).

Transmembrane regions (helical) follow at residues 4 to 24 (WILI…HSLA) and 33 to 53 (ILIA…IAIA).

Belongs to the UPF0391 family.

Its subcellular location is the cell membrane. This Chelativorans sp. (strain BNC1) protein is UPF0391 membrane protein Meso_3392.